A 260-amino-acid polypeptide reads, in one-letter code: Proteasome assembly chaperone 2 (260 aa).

This sequence belongs to the PSMG2 family. In terms of assembly, forms a heterodimer with psmg1. In terms of processing, degraded by the proteasome upon completion of 20S proteasome maturation.

It is found in the nucleus. Chaperone protein which promotes assembly of the 20S proteasome as part of a heterodimer with psmg1. This Danio rerio (Zebrafish) protein is Proteasome assembly chaperone 2.